An 893-amino-acid chain; its full sequence is Protein FAM186B (893 aa).

Disordered regions lie at residues 177 to 207 (GWQGRSPQTSPSHPQPLSPEQMLQDQHTMNT), 327 to 376 (QAED…PSPM), 537 to 557 (LEKEQESPRREPEQLGEDVER), 574 to 611 (LSLVPAPSRTQSAHQSRRPHLPMSPSTQQPALGKQRPM), and 806 to 827 (KPKKCKLPAASPRHIRPSGPTY). Composition is skewed to polar residues over residues 179–188 (QGRSPQTSPS) and 197–207 (QMLQDQHTMNT). Positions 303 to 331 (RYHDLLLMKQALEFQLKKAQNATGQAEDL) form a coiled coil. Residues 342 to 353 (SERETLPRKETV) are compositionally biased toward basic and acidic residues.

This sequence belongs to the FAM186 family.

In Homo sapiens (Human), this protein is Protein FAM186B (FAM186B).